The following is a 442-amino-acid chain: Chromosomal replication initiator protein DnaA (442 aa).

A domain I, interacts with DnaA modulators region spans residues 1-68 (MDAWPRCLER…ELLAYFVGNG (68 aa)). A domain II region spans residues 68 to 104 (GDVALAVGSRPRAPEPAPAPVAVPSAPQAAPIVPFAG). The domain III, AAA+ region stretch occupies residues 105 to 322 (NLDSHYTFAN…GALNTLVARA (218 aa)). ATP-binding residues include Gly-150, Gly-152, Lys-153, and Thr-154. The segment at 323–442 (NFTGRSITVE…WEKLIRKLSE (120 aa)) is domain IV, binds dsDNA.

It belongs to the DnaA family. Oligomerizes as a right-handed, spiral filament on DNA at oriC.

Its subcellular location is the cytoplasm. Functionally, plays an essential role in the initiation and regulation of chromosomal replication. ATP-DnaA binds to the origin of replication (oriC) to initiate formation of the DNA replication initiation complex once per cell cycle. Binds the DnaA box (a 9 base pair repeat at the origin) and separates the double-stranded (ds)DNA. Forms a right-handed helical filament on oriC DNA; dsDNA binds to the exterior of the filament while single-stranded (ss)DNA is stabiized in the filament's interior. The ATP-DnaA-oriC complex binds and stabilizes one strand of the AT-rich DNA unwinding element (DUE), permitting loading of DNA polymerase. After initiation quickly degrades to an ADP-DnaA complex that is not apt for DNA replication. Binds acidic phospholipids. This Xanthomonas axonopodis pv. citri (strain 306) protein is Chromosomal replication initiator protein DnaA.